The following is a 150-amino-acid chain: 3-dehydroquinate dehydratase (150 aa).

Y25 (proton acceptor) is an active-site residue. The substrate site is built by N76, H82, and D89. H102 functions as the Proton donor in the catalytic mechanism. Substrate is bound by residues 103–104 (LS) and R113.

The protein belongs to the type-II 3-dehydroquinase family. Homododecamer.

The enzyme catalyses 3-dehydroquinate = 3-dehydroshikimate + H2O. The protein operates within metabolic intermediate biosynthesis; chorismate biosynthesis; chorismate from D-erythrose 4-phosphate and phosphoenolpyruvate: step 3/7. In terms of biological role, catalyzes a trans-dehydration via an enolate intermediate. The chain is 3-dehydroquinate dehydratase from Trichodesmium erythraeum (strain IMS101).